Reading from the N-terminus, the 601-residue chain is ATP-dependent RNA helicase DeaD (601 aa).

Residues 6-34 carry the Q motif motif; the sequence is STFSFLGLNPFIIKSLSKMGYVKPSPIQA. One can recognise a Helicase ATP-binding domain in the interval 37–208; that stretch reads IPLLLEGRDV…KRFMKNPQEI (172 aa). 50 to 57 serves as a coordination point for ATP; the sequence is AQTGSGKT. The DEAD box motif lies at 156–159; the sequence is DEAD. One can recognise a Helicase C-terminal domain in the interval 231 to 378; sequence KTDALIRFLE…EVQLPKIEVL (148 aa). A compositionally biased stretch (basic and acidic residues) spans 564–581; it reads SIFNKDKNNKRRFSDNRL. Residues 564 to 601 are disordered; it reads SIFNKDKNNKRRFSDNRLNKSSSIKNETKSSFFRRKSV. The segment covering 582-594 has biased composition (polar residues); the sequence is NKSSSIKNETKSS.

It belongs to the DEAD box helicase family. DeaD/CsdA subfamily.

The protein localises to the cytoplasm. The catalysed reaction is ATP + H2O = ADP + phosphate + H(+). Functionally, DEAD-box RNA helicase involved in various cellular processes at low temperature, including ribosome biogenesis, mRNA degradation and translation initiation. The chain is ATP-dependent RNA helicase DeaD from Buchnera aphidicola subsp. Schizaphis graminum (strain Sg).